The chain runs to 438 residues: Porin AaxA (438 aa).

Residues 1–21 (MISFRFLLLSGLCALGISSYA) form the signal peptide.

The protein belongs to the OprB family.

The protein localises to the cell outer membrane. In terms of biological role, facilitates L-arginine uptake, as part of the AaxABC system. The arginine uptake by the bacterium in the macrophage may be a virulence factor against the host innate immune response. In Chlamydia pneumoniae (Chlamydophila pneumoniae), this protein is Porin AaxA (aaxA).